A 42-amino-acid polypeptide reads, in one-letter code: Protein YkgS (42 aa).

The sequence is that of Protein YkgS (ykgS) from Escherichia coli (strain K12).